A 97-amino-acid chain; its full sequence is DNA-binding protein NEQ150 (97 aa).

Belongs to the PDCD5 family.

The polypeptide is DNA-binding protein NEQ150 (Nanoarchaeum equitans (strain Kin4-M)).